A 201-amino-acid polypeptide reads, in one-letter code: Prostamide/prostaglandin F synthase (201 aa).

The protein belongs to the peroxiredoxin-like PRXL2 family. Prostamide/prostaglandin F synthase subfamily.

The protein resides in the cytoplasm. It localises to the cytosol. The enzyme catalyses prostaglandin H2 + [thioredoxin]-dithiol = prostaglandin F2alpha + [thioredoxin]-disulfide. It carries out the reaction prostamide F2alpha + [thioredoxin]-disulfide = prostamide H2 + [thioredoxin]-dithiol. Functionally, catalyzes the reduction of prostaglandin-ethanolamide H(2) (prostamide H(2)) to prostamide F(2alpha) with NADPH as proton donor. Also able to reduce prostaglandin H(2) to prostaglandin F(2alpha). In Xenopus tropicalis (Western clawed frog), this protein is Prostamide/prostaglandin F synthase (prxl2b).